The following is a 116-amino-acid chain: Hydrogenase maturation factor HypA (116 aa).

His-2 is a binding site for Ni(2+). Residues Cys-73, Cys-76, Cys-89, and Cys-92 each coordinate Zn(2+).

It belongs to the HypA/HybF family.

Its function is as follows. Involved in the maturation of [NiFe] hydrogenases. Required for nickel insertion into the metal center of the hydrogenase. This Chlorobium limicola (strain DSM 245 / NBRC 103803 / 6330) protein is Hydrogenase maturation factor HypA.